The following is a 163-amino-acid chain: Anthranilate 1,2-dioxygenase small subunit (163 aa).

The protein belongs to the bacterial ring-hydroxylating dioxygenase beta subunit family. In terms of assembly, the anthranilate dioxygenase (AntDO) multicomponent enzyme system is composed of an oxygenase component and a NADH:acceptor reductase component (AntC). The oxygenase component is a heterohexamer of 3 large (AntA) and 3 small (AntB) subunits.

The catalysed reaction is anthranilate + NADH + O2 + 3 H(+) = catechol + NH4(+) + CO2 + NAD(+). It carries out the reaction anthranilate + NADPH + O2 + 3 H(+) = catechol + NH4(+) + CO2 + NADP(+). It functions in the pathway aromatic compound metabolism; anthranilate degradation via hydroxylation; catechol from anthranilate: step 1/1. Functionally, component of anthranilate dioxygenase multicomponent enzyme system which catalyzes the incorporation of both atoms of molecular oxygen into anthranilate to form catechol. This Acinetobacter baylyi (strain ATCC 33305 / BD413 / ADP1) protein is Anthranilate 1,2-dioxygenase small subunit.